The following is a 593-amino-acid chain: Aspartate--tRNA ligase (593 aa).

Residue E180 participates in L-aspartate binding. Residues 204–207 (QIFK) form an aspartate region. Residue R226 coordinates L-aspartate. ATP-binding positions include 226-228 (RDE) and Q235. H453 is an L-aspartate binding site. E487 lines the ATP pocket. Position 494 (R494) interacts with L-aspartate. 539–542 (GLDR) is a binding site for ATP.

It belongs to the class-II aminoacyl-tRNA synthetase family. Type 1 subfamily. As to quaternary structure, homodimer.

It is found in the cytoplasm. It catalyses the reaction tRNA(Asp) + L-aspartate + ATP = L-aspartyl-tRNA(Asp) + AMP + diphosphate. Its function is as follows. Catalyzes the attachment of L-aspartate to tRNA(Asp) in a two-step reaction: L-aspartate is first activated by ATP to form Asp-AMP and then transferred to the acceptor end of tRNA(Asp). The sequence is that of Aspartate--tRNA ligase from Clostridium botulinum (strain ATCC 19397 / Type A).